Consider the following 161-residue polypeptide: Nucleotide-binding protein Vapar_3769 (161 aa).

Belongs to the YajQ family.

In terms of biological role, nucleotide-binding protein. The chain is Nucleotide-binding protein Vapar_3769 from Variovorax paradoxus (strain S110).